The sequence spans 1021 residues: Transmembrane protein 132A (1021 aa).

A signal peptide spans 1–32 (MTERAAAAPRGPYGAWLCLLVALALEVVRVGS). Over 33-848 (NQNTLDPIYL…VTDLELGMYA (816 aa)) the chain is Extracellular. The segment at 207–226 (PAGEGPGGCGPGTEEEPKEQ) is disordered. N-linked (GlcNAc...) asparagine glycosylation occurs at asparagine 276. The binds to HSPA5/GRP78 stretch occupies residues 606 to 913 (IEVRSPLSDS…QLDRCSSSSP (308 aa)). Residues 666-1021 (LPAPKQEVAL…NYMERIRGSS (356 aa)) are confers cellular localization similar to full-length form. The segment at 793-835 (AGDMGSHVGPGIRGKFERAEEEAGKEENEAKEEEEDEEEMVPA) is disordered. A compositionally biased stretch (basic and acidic residues) spans 806–820 (GKFERAEEEAGKEEN). Acidic residues predominate over residues 821–832 (EAKEEEEDEEEM). The chain crosses the membrane as a helical span at residues 849 to 869 (LLGIFCLAFLIFLVNGVVFVL). Over 870-1021 (RYQRKEPPDS…NYMERIRGSS (152 aa)) the chain is Cytoplasmic. Positions 903 to 955 (RQLDRCSSSSPPKGEGGCPCESGAGGDTSTVAPSASESPAGSTSTLARKEAGG) are disordered. Positions 929–948 (DTSTVAPSASESPAGSTSTL) are enriched in polar residues.

The protein belongs to the TMEM132 family. Interacts with HSPA5/GRP78. In terms of tissue distribution, expressed in the brain in neuronal cells of the hypothalamus, thalamus, cerebral cortex, amygdala, and cerebellum.

The protein resides in the golgi apparatus membrane. It localises to the endoplasmic reticulum membrane. Functionally, may play a role in embryonic and postnatal development of the brain. Increased resistance to cell death induced by serum starvation in cultured cells. Regulates cAMP-induced GFAP gene expression via STAT3 phosphorylation. The protein is Transmembrane protein 132A (Tmem132a) of Rattus norvegicus (Rat).